Consider the following 76-residue polypeptide: Conotoxin Vc6.6 (76 aa).

Residues 1–22 (MKLTCMVIVAVLFLTANTFVTA) form the signal peptide. Residues 23-52 (VPHSSNALENLYLKAHHEMNNPKDSELNKR) constitute a propeptide that is removed on maturation. 3 disulfide bridges follow: Cys-53–Cys-67, Cys-60–Cys-71, and Cys-66–Cys-75.

Belongs to the conotoxin O1 superfamily. Expressed by the venom duct.

It is found in the secreted. The chain is Conotoxin Vc6.6 from Conus victoriae (Queen Victoria cone).